Here is a 198-residue protein sequence, read N- to C-terminus: Pyridoxal 5'-phosphate synthase subunit PdxT (198 aa).

52 to 54 (GES) is a binding site for L-glutamine. The active-site Nucleophile is the cysteine 84. L-glutamine contacts are provided by residues arginine 115 and 142 to 143 (IR). Catalysis depends on charge relay system residues histidine 178 and glutamate 180.

The protein belongs to the glutaminase PdxT/SNO family. In the presence of PdxS, forms a dodecamer of heterodimers. Only shows activity in the heterodimer.

It catalyses the reaction aldehydo-D-ribose 5-phosphate + D-glyceraldehyde 3-phosphate + L-glutamine = pyridoxal 5'-phosphate + L-glutamate + phosphate + 3 H2O + H(+). The catalysed reaction is L-glutamine + H2O = L-glutamate + NH4(+). It functions in the pathway cofactor biosynthesis; pyridoxal 5'-phosphate biosynthesis. Its function is as follows. Catalyzes the hydrolysis of glutamine to glutamate and ammonia as part of the biosynthesis of pyridoxal 5'-phosphate. The resulting ammonia molecule is channeled to the active site of PdxS. This is Pyridoxal 5'-phosphate synthase subunit PdxT from Archaeoglobus fulgidus (strain ATCC 49558 / DSM 4304 / JCM 9628 / NBRC 100126 / VC-16).